Reading from the N-terminus, the 291-residue chain is MSMLPTFGFTQEQVACVCEVLQQGGNIERLGRFLWSLPACEHLHKNESVLKAKAVVAFHRGNFRELYKILESHQFSPHNHAKLQQLWLKAHYIEAEKLRGRPLGAVGKYRVRRKFPLPRSIWDGEETSYCFKEKSRSVLREWYAHNPYPSPREKRELAEATGLTTTQVSNWFKNRRQRDRAAEAKERENNENSNSNSHNPLNGSGKSVLGSSEDEKTPSGTPDHSSSSPALLLSPPPPGLPSLHSLGHPPGPSAVPVPVPGGGGADPLQHHHGLQDSILNPMSANLVDLGS.

The segment at residues 124–183 (GEETSYCFKEKSRSVLREWYAHNPYPSPREKRELAEATGLTTTQVSNWFKNRRQRDRAAE) is a DNA-binding region (homeobox). Residues 168–279 (VSNWFKNRRQ…HHHGLQDSIL (112 aa)) are disordered. Residues 179–190 (DRAAEAKERENN) are compositionally biased toward basic and acidic residues. Low complexity predominate over residues 224-233 (HSSSSPALLL). The span at 249 to 259 (PPGPSAVPVPV) shows a compositional bias: pro residues.

This sequence belongs to the SIX/Sine oculis homeobox family. Interacts with TCF7L2; in a canonical Wnt signaling independent manner; prevents transcription of differentiation genes in cap mesenchyme. Interacts with OSR1; form a strong repressor complex with TCF7L2, TLE2 and TLE3 to prevent the activation of Wnt/beta-catenin target genes in the cap mesenchyme. Interacts with HOXA11, EYA1 and EYA3. As to expression, strongly expressed in skeletal muscle. Expressed in Wilms' tumor and in the cap mesenchyme of fetal kidney (at protein level).

The protein resides in the nucleus. Transcription factor that plays an important role in the development of several organs, including kidney, skull and stomach. During kidney development, maintains cap mesenchyme multipotent nephron progenitor cells in an undifferentiated state by opposing the inductive signals emanating from the ureteric bud and cooperates with WNT9B to promote renewing progenitor cells proliferation. Acts through its interaction with TCF7L2 and OSR1 in a canonical Wnt signaling independent manner preventing transcription of differentiation genes in cap mesenchyme such as WNT4. Also acts independently of OSR1 to activate expression of many cap mesenchyme genes, including itself, GDNF and OSR1. During craniofacial development plays a role in growth and elongation of the cranial base through regulation of chondrocyte differentiation. During stomach organogenesis, controls pyloric sphincter formation and mucosal growth through regulation of a gene network including NKX2-5, BMPR1B, BMP4, SOX9 and GREM1. During branchial arch development, acts to mediate HOXA2 control over the insulin-like growth factor pathway. May also be involved in limb tendon and ligament development. Plays a role in cell proliferation and migration. The polypeptide is Homeobox protein SIX2 (SIX2) (Homo sapiens (Human)).